Here is a 448-residue protein sequence, read N- to C-terminus: ATP-dependent protease ATPase subunit HslU (448 aa).

ATP is bound by residues Ile18, 60–65 (GVGKTE), Asp261, Glu326, and Arg398.

This sequence belongs to the ClpX chaperone family. HslU subfamily. A double ring-shaped homohexamer of HslV is capped on each side by a ring-shaped HslU homohexamer. The assembly of the HslU/HslV complex is dependent on binding of ATP.

The protein localises to the cytoplasm. In terms of biological role, ATPase subunit of a proteasome-like degradation complex; this subunit has chaperone activity. The binding of ATP and its subsequent hydrolysis by HslU are essential for unfolding of protein substrates subsequently hydrolyzed by HslV. HslU recognizes the N-terminal part of its protein substrates and unfolds these before they are guided to HslV for hydrolysis. The polypeptide is ATP-dependent protease ATPase subunit HslU (Paraburkholderia phytofirmans (strain DSM 17436 / LMG 22146 / PsJN) (Burkholderia phytofirmans)).